The chain runs to 168 residues: G/U mismatch-specific DNA glycosylase (168 aa).

The protein belongs to the uracil-DNA glycosylase (UDG) superfamily. TDG/mug family. Binds DNA as a monomer.

It is found in the cytoplasm. The catalysed reaction is Specifically hydrolyzes mismatched double-stranded DNA and polynucleotides, releasing free uracil.. Its function is as follows. Excises ethenocytosine and uracil, which can arise by alkylation or deamination of cytosine, respectively, from the corresponding mispairs with guanine in ds-DNA. It is capable of hydrolyzing the carbon-nitrogen bond between the sugar-phosphate backbone of the DNA and the mispaired base. The complementary strand guanine functions in substrate recognition. Required for DNA damage lesion repair in stationary-phase cells. This Salmonella agona (strain SL483) protein is G/U mismatch-specific DNA glycosylase.